A 200-amino-acid polypeptide reads, in one-letter code: uncharacterized protein (200 aa).

Residues 3–119 form the Response regulatory domain; that stretch reads RLFIAEDQRM…DLADAIRKCV (117 aa). Asp54 is modified (4-aspartylphosphate). In terms of domain architecture, HTH luxR-type spans 133–198; the sequence is MMRDENPLTV…EAASIAEEKG (66 aa). Positions 157-176 form a DNA-binding region, H-T-H motif; sequence TKDITLELYLSQGTVRNYIS.

In terms of processing, phosphorylated by YvfT.

The protein resides in the cytoplasm. Member of the two-component regulatory system YvfT/YvfU. This is an uncharacterized protein from Bacillus subtilis (strain 168).